A 3242-amino-acid polypeptide reads, in one-letter code: tRNA nuclease CdiA (3242 aa).

Residues 1-32 (MHQPPVRFTYRLLSYLISTIIAGQPLLPAVGA) form the signal peptide. The two-partner system transport domain (TPS) stretch occupies residues 36–322 (PQNGAGMDKA…AGGNLSVTGT (287 aa)). Positions 351–1376 (GELTAGQNAM…IVVRTGHLLN (1026 aa)) are FHA-1. The tract at residues 1377–1668 (QREGFSATTT…TGQTGISDDW (292 aa)) is receptor-binding domain (RBD). The segment at 1668 to 1852 (WPLPSGNNGY…LSPEDITLHN (185 aa)) is YP domain. The interval 1853 to 1913 (GSVISGNNVQ…DLSAIGDISN (61 aa)) is periplasmic FHA-1 repeat (pFR). Residues 2021-2631 (DNSASSTTSQ…TSKYDSKQTS (611 aa)) are FHA-2. The span at 2075-2091 (RESKNSRNGRSESHESH) shows a compositional bias: basic and acidic residues. Disordered stretches follow at residues 2075 to 2094 (RESKNSRNGRSESHESHAAV), 2310 to 2333 (GSSKTTHDRREAGTTQSQSASTIG), and 2439 to 2481 (TMAS…NAGN). The segment covering 2322-2333 (GTTQSQSASTIG) has biased composition (polar residues). A DUF638-CT domain; not toxic when added to the outside of E.coli, does not interfere with F-pilus mediated conjugation, toxic when expressed intracellularly region spans residues 2969–3242 (GVDPSKLTED…IESALKGYGI (274 aa)). The pre-toxin (PT) domain stretch occupies residues 2972–3015 (PSKLTEDQKQTVSTLATLSAGMAGGIASGDVAGAAAGAGAGKNV). Residues 3016 to 3019 (VENN) carry the VENN CT cleavage motif motif. The toxin import domain; sufficient to import the tRNA nuclease domain of colicin E5 into E.coli, may bind F-pili stretch occupies residues 3016–3097 (VENNALSLVA…KYLSSLHDKY (82 aa)). The segment at 3016–3242 (VENNALSLVA…IESALKGYGI (227 aa)) is CT domain; toxic when added to the outside of E.coli and when expressed intracellularly. The inner membrane translocation domain (IMTD), targets protein to FtsH stretch occupies residues 3020–3141 (ALSLVARGCA…SENDPKQQNE (122 aa)). A C-terminal effector domain (CT) region spans residues 3020 to 3242 (ALSLVARGCA…IESALKGYGI (223 aa)). The segment at 3098–3242 (GSGAASNPNI…IESALKGYGI (145 aa)) is tRNase function, does not interfere with F-pilus mediated conjugation. Residues 3116–3146 (KVELGGSGSGTGTPPPSENDPKQQNEKTVDK) are disordered. Residues 3134-3146 (NDPKQQNEKTVDK) are compositionally biased toward basic and acidic residues. Residues 3137 to 3238 (KQQNEKTVDK…AINKIESALK (102 aa)) are a coiled coil. Residues D3170, H3193, and E3196 contribute to the active site.

This sequence in the N-terminal section; belongs to the CdiA toxin family. In terms of assembly, the C-terminal (CT) domain interacts with cognate CdiI but not non-cognate CdiI from D.dadantii strain 3937. CdiA-CT also interacts with CysK; this is blocked upon preincubation with O-acetyl-L-serine. CysK forms a complex with CdiA-CT/CdiI. One CdiA toxin subunit binds to each subunit of the CysK homodimer, and one CdiI immunity protein binds to each toxin subunit; the immune complex is thus a dimer of trimers. The 4 C-terminal residues of CdiA fit into the active site of CysK. It depends on a divalent metal cation as a cofactor.

The protein resides in the secreted. It is found in the target cell membrane. Its subcellular location is the target cell. The protein localises to the target cell cytoplasm. Its function is as follows. Toxic component of a toxin-immunity protein module, which functions as a cellular contact-dependent growth inhibition (CDI) system. CDI modules allow bacteria to communicate with and inhibit the growth of closely related neighboring bacteria in a contact-dependent fashion (target cell counts decrease 100- to 1000-fold). CdiA toxicity is neutralized by its cognate immunity protein CdiI, but not by CdiI from other bacteria. Uses heterotrimeric OmpC and OmpF as target cell outer membrane receptors; receptor function depends on polymorphisms in extracellular loops L4 and L5 of OmpC; interacts with itself and closely related bacteria but also with OmpC from E.cloacae ATCC 13047. Its ability to preferentially bind to 'self' receptors suggests it may also play a role in self-recognition and kin selection. A bamA mutation that decreases its expression about 5-fold is partially resistant to this strain of CdiA, probably due to decreased outer membrane receptor protein assembly. Isolated CdiA-CT is imported in an F-pilus-mediated fashion; CdiA-CT inhibits F-mediated conjugation, probably via its N-terminus (residues 3016-3097), although it is not clear if this is physiologically significant. Gains access to the cytoplasm of target cells by using integral inner membrane protein FtsH. The C-terminal domain (CT) cleaves within tRNA anticodon loops; this activity is inhibited by cognate CdiI. tRNase activity of CdiA-CT is stimulated by CysK, although the extreme C-terminus (residues 3098-3242) has tRNase activity in the absence of CysK. In vivo CDI toxicity requires CysK. CysK stabilizes CdiA-CT, allowing it to bind tRNA substrate; neither CdiA-CT nor CysK bind tRNA alone in vitro. Purified CdiA-CT (residues 3016-3242) inhibits E.coli cell growth when added to cultures alone or in complex with cognate CdiI, growth is inhibited when cognate CdiI is present within the cell but not when a CdiA-CT/CdiI complex is added extracellularly, suggesting CdiA-CT alone but not the CdiA-CT/CdiI complex is imported into the target cell. Functionally, the CdiA protein is thought to be exported from the cell through the central lumen of CdiB, the other half of its two-partner system (TPS). The TPS domain probably remains associated with CdiB while the FHA-1 domain forms an extended filament with the receptor-binding domain (RBD) at its extremity; in the secretion arrested state the C-terminus of the RBD and YP domains form a hairpin-like structure as the FHA-2, PT and CT domains are periplasmic. The YP domain is probably responsible for this arrest at the point where it re-enters the host cell periplasm. Upon binding to a target cell outer membrane receptor (heterotrimeric OmpC-OmpF for this CDI) a signal is transmitted to activate secretion. The filament elongates slightly, the rest of CdiA is secreted and the FHA-2 domain becomes stably associated with the target cell's outer membrane where it facilitates entry of the toxic CT domain into the target cell periplasm. From there the toxic CT domain is cleaved and gains access to the target cell cytoplasm via an inner membrane protein (FtsH for this CDI). The sequence is that of tRNA nuclease CdiA from Escherichia coli O6:K15:H31 (strain 536 / UPEC).